The primary structure comprises 377 residues: Adaptive-response sensory kinase SasA (377 aa).

Positions 154 to 373 constitute a Histidine kinase domain; it reads MLVHDLRSPL…SFHFTLPVYR (220 aa). His157 carries the post-translational modification Phosphohistidine; by autocatalysis.

Homooligomerizes. Interacts with KaiC. Participates in the KaiABC clock complex, whose core is composed of a KaiC homohexamer, 6 KaiB and up to 6 KaiA dimers. SasA and KaiB(fs) compete to bind to KaiC.

The catalysed reaction is ATP + protein L-histidine = ADP + protein N-phospho-L-histidine.. In terms of biological role, member of the two-component regulatory system SasA/RpaA involved in genome-wide circadian gene expression. One of several clock output pathways. Participates in the Kai clock protein complex, the main circadian regulator in cyanobacteria, via its interaction with KaiC. KaiC enhances the autophosphorylation activity of SasA, which then transfers its phosphate group to RpaA to activate it. In addition to its output function, recruits fold-shifted KaiB (KaiB(fs)) to KaiC to cooperatively form the KaiB(6):KaiC(6) complex (independent of SasA kinase activity). Required for robustness of the circadian rhythm of gene expression and is involved in clock output, also required for adaptation to light/dark cycles. The sequence is that of Adaptive-response sensory kinase SasA from Synechococcus sp. (strain JA-2-3B'a(2-13)) (Cyanobacteria bacterium Yellowstone B-Prime).